A 243-amino-acid chain; its full sequence is NAD-dependent protein deacetylase (243 aa).

One can recognise a Deacetylase sirtuin-type domain in the interval 1–243 (MKHDLETLKH…VSVVKSLMTE (243 aa)). NAD(+) is bound by residues Ala24, Phe35, Arg36, Gln105, Ile107, Asp108, and His123. Position 35 (Phe35) interacts with nicotinamide. Nicotinamide-binding residues include Ile107 and Asp108. Residue His123 is the Proton acceptor of the active site. Cys131, Cys134, Cys151, and Cys154 together coordinate Zn(2+). NAD(+)-binding residues include Ser192, Ser193, Asn215, and Asp232.

This sequence belongs to the sirtuin family. Class U subfamily. Zn(2+) serves as cofactor.

It is found in the cytoplasm. It catalyses the reaction N(6)-acetyl-L-lysyl-[protein] + NAD(+) + H2O = 2''-O-acetyl-ADP-D-ribose + nicotinamide + L-lysyl-[protein]. In terms of biological role, NAD-dependent protein deacetylase which modulates the activities of several enzymes which are inactive in their acetylated form. The protein is NAD-dependent protein deacetylase of Staphylococcus aureus (strain NCTC 8325 / PS 47).